A 200-amino-acid chain; its full sequence is General odorant-binding protein 70 (200 aa).

Residues 1–29 form the signal peptide; it reads MRRQYSMWASTVAVIACGSALMLLHPVGA. Disulfide bonds link C105–C174 and C152–C183.

This sequence belongs to the PBP/GOBP family.

It localises to the secreted. Its function is as follows. Present in the aqueous fluid surrounding olfactory sensory dendrites and are thought to aid in the capture and transport of hydrophobic odorants into and through this fluid. This Anopheles gambiae (African malaria mosquito) protein is General odorant-binding protein 70 (Obp70).